The primary structure comprises 257 residues: Snake venom serine protease KN10 (257 aa).

An N-terminal signal peptide occupies residues 1–18; that stretch reads MVLIRVLANLLILQLSYA. The propeptide occupies 19–24; the sequence is QKSSEL. Residues 25–248 enclose the Peptidase S1 domain; that stretch reads VVGGDECNIN…HLDWIKSIIA (224 aa). Intrachain disulfides connect cysteine 31-cysteine 162, cysteine 49-cysteine 65, cysteine 141-cysteine 209, cysteine 173-cysteine 188, and cysteine 199-cysteine 224. Catalysis depends on histidine 64, which acts as the Charge relay system. Asparagine 102 carries an N-linked (GlcNAc...) asparagine glycan. Aspartate 109 serves as the catalytic Charge relay system. Residues asparagine 120 and asparagine 121 are each glycosylated (N-linked (GlcNAc...) asparagine). The active-site Charge relay system is the serine 203.

The protein belongs to the peptidase S1 family. Snake venom subfamily. Monomer. Expressed by the venom gland.

Its subcellular location is the secreted. Its function is as follows. Snake venom serine protease that may act in the hemostasis system of the prey. This is Snake venom serine protease KN10 from Trimeresurus stejnegeri (Chinese green tree viper).